A 338-amino-acid chain; its full sequence is UDP-glucose 4-epimerase (338 aa).

Residues 11 to 12 (FI), 31 to 36 (DNLCNS), 58 to 59 (DI), 80 to 84 (FAGLK), Asn99, Ser124, Tyr149, Lys153, and Phe178 each bind NAD(+). Positions 124 and 149 each coordinate substrate. Tyr149 functions as the Proton acceptor in the catalytic mechanism. Substrate-binding positions include Asn179, 199-200 (NL), 216-218 (SVF), Arg231, and 292-295 (RAGD).

It belongs to the NAD(P)-dependent epimerase/dehydratase family. In terms of assembly, homodimer. The cofactor is NAD(+).

The enzyme catalyses UDP-alpha-D-glucose = UDP-alpha-D-galactose. It participates in carbohydrate metabolism; galactose metabolism. Functionally, involved in the metabolism of galactose. Plays an essential role in the incorporation of galactose into meningococcal lipopolysaccharide surface molecules, which are important for pathogenesis. Catalyzes the conversion of UDP-galactose (UDP-Gal) to UDP-glucose (UDP-Glc) through a mechanism involving the transient reduction of NAD. The chain is UDP-glucose 4-epimerase (galE) from Neisseria gonorrhoeae.